The following is a 503-amino-acid chain: Mitogen-activated protein kinase kinae mkk2 (503 aa).

Residues 1 to 130 (MSSSPVPLLR…ASGPASASSS (130 aa)) form a disordered region. Positions 53–66 (APQPQRPSTRPAPP) are enriched in pro residues. Polar residues predominate over residues 100-115 (TGLNESTGHSRSSSFT). The span at 121-130 (ASGPASASSS) shows a compositional bias: low complexity. Residues 211–481 (IIELGSLGEG…PWRMLEHPWM (271 aa)) enclose the Protein kinase domain. Residues 217–225 (LGEGAGGAV) and lysine 240 contribute to the ATP site. The active-site Proton acceptor is aspartate 338.

It belongs to the protein kinase superfamily. STE Ser/Thr protein kinase family. MAP kinase kinase subfamily.

The enzyme catalyses L-seryl-[protein] + ATP = O-phospho-L-seryl-[protein] + ADP + H(+). It catalyses the reaction L-threonyl-[protein] + ATP = O-phospho-L-threonyl-[protein] + ADP + H(+). Its function is as follows. Mitogen-activated kinase kinase (MAPKK), part of the cell wall integrity (CWI) signaling pathway composed by three protein kinases bck1, mkk2 and mpkA and responsible for the maintaining of cell-wall integrity balance. The CWI pathway also regulates the oxidative stress response, as well as the production of some secondary metabolites including pyomelanin. The sequence is that of Mitogen-activated protein kinase kinae mkk2 from Aspergillus fumigatus (strain CBS 144.89 / FGSC A1163 / CEA10) (Neosartorya fumigata).